A 655-amino-acid chain; its full sequence is p-hydroxybenzoic acid efflux pump subunit AaeB (655 aa).

At 1 to 12 (MGIFSIANQHIR) the chain is on the periplasmic side. A helical transmembrane segment spans residues 13–33 (FAVKLATAIVLALFVGFHFQL). The Cytoplasmic portion of the chain corresponds to 34–37 (ETPR). The chain crosses the membrane as a helical span at residues 38–58 (WAVLTAAIVAAGPAFAAGGEP). Over 59 to 68 (YSGAIRYRGF) the chain is Periplasmic. A helical membrane pass occupies residues 69–89 (LRIIGTFIGCIAGLVIIIAMI). Residues 90–92 (RAP) lie on the Cytoplasmic side of the membrane. The chain crosses the membrane as a helical span at residues 93 to 113 (LLMILVCCIWAGFCTWISSLV). Topologically, residues 114 to 120 (RIENSYA) are periplasmic. A helical transmembrane segment spans residues 121–141 (WGLAGYTALIIVITIQPEPLL). The Cytoplasmic portion of the chain corresponds to 142–151 (TPQFAVERCS). A helical transmembrane segment spans residues 152 to 172 (EIVIGIVCAIMADLLFSPRSI). Residues 173-369 (KQEVDRELES…RTTLSCILGT (197 aa)) lie on the Periplasmic side of the membrane. A helical membrane pass occupies residues 370–390 (LFWLWTGWTSGSGAMVMIAVV). Over 391–406 (TSLAMRLPNPRMVAID) the chain is Cytoplasmic. A helical transmembrane segment spans residues 407-427 (FIYGTLAALPLGLLYFLVIIP). At 428 to 430 (NTQ) the chain is on the periplasmic side. Residues 431–451 (QSMLLLCISLAVLGFFLGIEV) form a helical membrane-spanning segment. Residues 452-458 (QKRRLGS) are Cytoplasmic-facing. A helical membrane pass occupies residues 459–479 (MGALASTINIIVLDNPMTFHF). The Periplasmic segment spans residues 480 to 481 (SQ). Residues 482–502 (FLDSALGQIVGCVLAFTVILL) form a helical membrane-spanning segment. Residues 503–655 (VRDKSRDRTG…HKYQHALTDS (153 aa)) are Cytoplasmic-facing.

The protein belongs to the aromatic acid exporter ArAE (TC 2.A.85) family.

The protein resides in the cell inner membrane. Functionally, forms an efflux pump with AaeA. Could function as a metabolic relief valve, allowing to eliminate certain compounds when they accumulate to high levels in the cell. This chain is p-hydroxybenzoic acid efflux pump subunit AaeB, found in Shigella flexneri.